The sequence spans 83 residues: Cell division topological specificity factor (83 aa).

Belongs to the MinE family.

Its function is as follows. Prevents the cell division inhibition by proteins MinC and MinD at internal division sites while permitting inhibition at polar sites. This ensures cell division at the proper site by restricting the formation of a division septum at the midpoint of the long axis of the cell. This is Cell division topological specificity factor from Buchnera aphidicola subsp. Schizaphis graminum (strain Sg).